We begin with the raw amino-acid sequence, 426 residues long: Serine--tRNA ligase (426 aa).

233-235 (TAE) provides a ligand contact to L-serine. 264-266 (RSE) contacts ATP. Glu-287 is a binding site for L-serine. 351–354 (EISS) provides a ligand contact to ATP. Ser-387 serves as a coordination point for L-serine.

The protein belongs to the class-II aminoacyl-tRNA synthetase family. Type-1 seryl-tRNA synthetase subfamily. In terms of assembly, homodimer. The tRNA molecule binds across the dimer.

It localises to the cytoplasm. The enzyme catalyses tRNA(Ser) + L-serine + ATP = L-seryl-tRNA(Ser) + AMP + diphosphate + H(+). It carries out the reaction tRNA(Sec) + L-serine + ATP = L-seryl-tRNA(Sec) + AMP + diphosphate + H(+). It functions in the pathway aminoacyl-tRNA biosynthesis; selenocysteinyl-tRNA(Sec) biosynthesis; L-seryl-tRNA(Sec) from L-serine and tRNA(Sec): step 1/1. Its function is as follows. Catalyzes the attachment of serine to tRNA(Ser). Is also able to aminoacylate tRNA(Sec) with serine, to form the misacylated tRNA L-seryl-tRNA(Sec), which will be further converted into selenocysteinyl-tRNA(Sec). This chain is Serine--tRNA ligase, found in Pseudomonas savastanoi pv. phaseolicola (strain 1448A / Race 6) (Pseudomonas syringae pv. phaseolicola (strain 1448A / Race 6)).